A 426-amino-acid chain; its full sequence is Protein CgeD (426 aa).

This sequence to B.subtilis spore coat polysaccharide biosynthesis protein SpsA.

May be involved in maturation of the outermost layer of the spore. This Bacillus subtilis (strain 168) protein is Protein CgeD (cgeD).